We begin with the raw amino-acid sequence, 729 residues long: Fatty acid oxidation complex subunit alpha (729 aa).

Positions 1–189 (MLYKGDTLYL…KIGLVDGVVK (189 aa)) are enoyl-CoA hydratase/isomerase. Asp296 is a binding site for substrate. Positions 311–729 (ETPKQAAVLG…ARPVGSLKTA (419 aa)) are 3-hydroxyacyl-CoA dehydrogenase. Residues Met324, Asp343, 400–402 (VVE), Lys407, and Ser429 each bind NAD(+). The active-site For 3-hydroxyacyl-CoA dehydrogenase activity is His450. Residue Asn453 participates in NAD(+) binding. Residues Asn500 and Tyr660 each contribute to the substrate site. The tract at residues 708 to 729 (RHNEPYYPPVEPARPVGSLKTA) is disordered.

In the N-terminal section; belongs to the enoyl-CoA hydratase/isomerase family. This sequence in the C-terminal section; belongs to the 3-hydroxyacyl-CoA dehydrogenase family. In terms of assembly, heterotetramer of two alpha chains (FadB) and two beta chains (FadA).

The enzyme catalyses a (3S)-3-hydroxyacyl-CoA + NAD(+) = a 3-oxoacyl-CoA + NADH + H(+). It catalyses the reaction a (3S)-3-hydroxyacyl-CoA = a (2E)-enoyl-CoA + H2O. It carries out the reaction a 4-saturated-(3S)-3-hydroxyacyl-CoA = a (3E)-enoyl-CoA + H2O. The catalysed reaction is (3S)-3-hydroxybutanoyl-CoA = (3R)-3-hydroxybutanoyl-CoA. The enzyme catalyses a (3Z)-enoyl-CoA = a 4-saturated (2E)-enoyl-CoA. It catalyses the reaction a (3E)-enoyl-CoA = a 4-saturated (2E)-enoyl-CoA. It participates in lipid metabolism; fatty acid beta-oxidation. Involved in the aerobic and anaerobic degradation of long-chain fatty acids via beta-oxidation cycle. Catalyzes the formation of 3-oxoacyl-CoA from enoyl-CoA via L-3-hydroxyacyl-CoA. It can also use D-3-hydroxyacyl-CoA and cis-3-enoyl-CoA as substrate. This chain is Fatty acid oxidation complex subunit alpha, found in Salmonella agona (strain SL483).